The sequence spans 489 residues: Cytochrome P450 2C3 (489 aa).

A heme-binding site is contributed by Cys434.

The protein belongs to the cytochrome P450 family. It depends on heme as a cofactor.

The protein resides in the endoplasmic reticulum membrane. The protein localises to the microsome membrane. The catalysed reaction is an organic molecule + reduced [NADPH--hemoprotein reductase] + O2 = an alcohol + oxidized [NADPH--hemoprotein reductase] + H2O + H(+). In terms of biological role, cytochromes P450 are a group of heme-thiolate monooxygenases. In liver microsomes, this enzyme is involved in an NADPH-dependent electron transport pathway. It oxidizes a variety of structurally unrelated compounds, including steroids, fatty acids, and xenobiotics. This is Cytochrome P450 2C3 (CYP2C3) from Oryctolagus cuniculus (Rabbit).